We begin with the raw amino-acid sequence, 206 residues long: Small ribosomal subunit protein uS4 (206 aa).

The S4 RNA-binding domain occupies 96–156 (TRLDNVVYRM…EKSRTQARIK (61 aa)).

This sequence belongs to the universal ribosomal protein uS4 family. In terms of assembly, part of the 30S ribosomal subunit. Contacts protein S5. The interaction surface between S4 and S5 is involved in control of translational fidelity.

One of the primary rRNA binding proteins, it binds directly to 16S rRNA where it nucleates assembly of the body of the 30S subunit. Its function is as follows. With S5 and S12 plays an important role in translational accuracy. This chain is Small ribosomal subunit protein uS4, found in Shewanella baltica (strain OS223).